A 314-amino-acid polypeptide reads, in one-letter code: Olfactory receptor 2Z1 (314 aa).

At 1–25 (MGDVNQSVASDFILVGLFSHSGSRQ) the chain is on the extracellular side. N-linked (GlcNAc...) asparagine glycosylation occurs at Asn-5. Residues 26-49 (LLFSLVAVMFVIGLLGNTVLLFLI) traverse the membrane as a helical segment. At 50 to 57 (RVDSRLHT) the chain is on the cytoplasmic side. Residues 58–79 (PMYFLLSQLSLFDIGCPMVTIP) traverse the membrane as a helical segment. Residues 80 to 100 (KMASDFLRGEGATSYGGGAAQ) lie on the Extracellular side of the membrane. A helical membrane pass occupies residues 101–120 (IFFLTLMGVAEGVLLVLMSY). Over 121–139 (DRYVAVCQPLQYPVLMRRQ) the chain is Cytoplasmic. The chain crosses the membrane as a helical span at residues 140–158 (VCLLMMGSSWVVGVLNASI). Topologically, residues 159–195 (QTSITLHFPYCASRIVDHFFCEVPALLKLSCADTCAY) are extracellular. A helical membrane pass occupies residues 196–219 (EMALSTSGVLILMLPLSLIATSYG). The Cytoplasmic portion of the chain corresponds to 220–236 (HVLQAVLSMRSEEARHK). A helical transmembrane segment spans residues 237–259 (AVTTCSSHITVVGLFYGAAVFMY). Residues 260-272 (MVPCAYHSPQQDN) are Extracellular-facing. The chain crosses the membrane as a helical span at residues 273-292 (VVSLFYSLVTPTLNPLIYSL). The Cytoplasmic portion of the chain corresponds to 293–314 (RNPEVWMALVKVLSRAGLRQMC).

Belongs to the G-protein coupled receptor 1 family.

The protein resides in the cell membrane. Its function is as follows. Odorant receptor. The sequence is that of Olfactory receptor 2Z1 (OR2Z1) from Homo sapiens (Human).